A 673-amino-acid polypeptide reads, in one-letter code: uncharacterized protein (673 aa).

The segment at 1–95 (MLNGEKSALG…QSSAIADSIG (95 aa)) is disordered. A compositionally biased stretch (low complexity) spans 13-40 (PSNSNSSSKLNAKSPNFIPSSSNIPRSS). A compositionally biased stretch (basic and acidic residues) spans 42-60 (KTKEHSADRKPHRNSEKKT). The RING-type zinc-finger motif lies at 214–273 (CPFCLEEKPVAARMSRCGHVYCFSCLLRFVETPTAAEVKAAETSGTKIVKCGHRSCPICW). The interval 649-673 (SAPSKNSKNKKKKKLVLLSTGAAHR) is disordered.

Its subcellular location is the cytoplasm. It is found in the nucleus. This is an uncharacterized protein from Schizosaccharomyces pombe (strain 972 / ATCC 24843) (Fission yeast).